Consider the following 442-residue polypeptide: NALCN channel auxiliary factor 2 (442 aa).

A helical transmembrane segment spans residues 42 to 62 (LASLLFFTVLLSNHLWLVSAG). N-linked (GlcNAc...) asparagine glycosylation is found at Asn77, Asn100, Asn171, Asn279, and Asn354. Residues 406-426 (CVLVLMLLHTMASFSVVQNGV) form a helical membrane-spanning segment.

This sequence belongs to the NALF family.

It is found in the membrane. Its function is as follows. Probable component of the NALCN channel complex, a channel that regulates the resting membrane potential and controls neuronal excitability. This is NALCN channel auxiliary factor 2 (nalf2) from Xenopus tropicalis (Western clawed frog).